We begin with the raw amino-acid sequence, 873 residues long: Zinc fingers and homeoboxes protein 1 (873 aa).

Positions 24-63 (LISDLDEGPPVLTPVENTRAESISSDEEVHESVDSDNQQN) are disordered. Thr36 carries the post-translational modification Phosphothreonine. A phosphoserine mark is found at Ser45, Ser47, and Ser48. 2 C2H2-type zinc fingers span residues 70–93 (YECKYCTFQTPDLNMFTFHVDSEH) and 102–125 (YVCVECNFLTKRYDALSEHNLKYH). Lys159 is covalently cross-linked (Glycyl lysine isopeptide (Lys-Gly) (interchain with G-Cter in SUMO2)). Ser202 carries the phosphoserine modification. Residues 202–236 (SVEDVPEEKENEIKPDREEIVENPSSSASESNTST) are disordered. Over residues 212–221 (NEIKPDREEI) the composition is skewed to basic and acidic residues. The segment covering 223–236 (ENPSSSASESNTST) has biased composition (low complexity). Positions 272-432 (NSNLIPKVLI…QNNIQKSQVP (161 aa)) are required for dimerization. Positions 272 to 564 (NSNLIPKVLI…AQPKQSWNPF (293 aa)) are required for interaction with NFYA. A DNA-binding region (homeobox 1) is located at residues 284 to 346 (NSIPTYNAAL…LKHGVSWTPE (63 aa)). Glycyl lysine isopeptide (Lys-Gly) (interchain with G-Cter in SUMO2) cross-links involve residues Lys441, Lys454, Lys485, and Lys629. DNA-binding regions (homeobox) lie at residues 464 to 526 (SFGI…KSNQ) and 569 to 630 (PQKF…EEKM). Disordered regions lie at residues 626-667 (KEEK…ICKK) and 732-770 (SSMNGLSSLRKRGRGRPKGRGRGRPRGRPRGSKRINNWD). Ser648 bears the Phosphoserine mark. The segment at residues 660–722 (STGKICKKTP…YAWKNGNLKW (63 aa)) is a DNA-binding region (homeobox 4). The interval 734 to 768 (MNGLSSLRKRGRGRPKGRGRGRPRGRPRGSKRINN) is required for nuclear localization. The span at 740 to 764 (LRKRGRGRPKGRGRGRPRGRPRGSK) shows a compositional bias: basic residues. Ser774 bears the Phosphoserine mark. The homeobox 5 DNA-binding region spans 777-832 (KFKTGTAILKDYYLKHKFLNEQDLDELVNKSHMGYEQVREWFAERQRRSELGIELF). The tract at residues 829-873 (IELFEENEEEDEVIDDQEEDEEETDDSDTWEPPRHVKRKLSKSDD) is disordered. The segment covering 831-857 (LFEENEEEDEVIDDQEEDEEETDDSDT) has biased composition (acidic residues). The segment at 831–873 (LFEENEEEDEVIDDQEEDEEETDDSDTWEPPRHVKRKLSKSDD) is required for repressor activity. Basic residues predominate over residues 863-873 (HVKRKLSKSDD).

The protein belongs to the ZHX family. In terms of assembly, forms homodimers. Heterodimer (via HD1 domain) with ZHX2 (via HD1 domain). Also forms a heterodimer with ZHX3 which is a prerequisite for repressor activity. Interacts with ATF7IP and NFYA. Interacts (via homeobox domains) with DNMT3B (via PWWP domain). As to expression, ubiquitously expressed. Expressed in podocytes.

The protein localises to the nucleus. Functionally, acts as a transcriptional repressor. Increases DNMT3B-mediated repressive transcriptional activity when DNMT3B is tethered to DNA. May link molecule between DNMT3B and other co-repressor proteins. The sequence is that of Zinc fingers and homeoboxes protein 1 (ZHX1) from Homo sapiens (Human).